The sequence spans 225 residues: Insulin-induced gene 2 protein (225 aa).

The Cytoplasmic segment spans residues 1-28; sequence MAEGETESPGPKKCGPYISSVTSQSVNL. Residues 29 to 51 traverse the membrane as a helical segment; sequence MIRGVVLFFIGVFLALVLNLLQI. The Lumenal portion of the chain corresponds to 52–70; the sequence is QRNVTLFPPDVIASIFSSA. The helical transmembrane segment at 71–88 threads the bilayer; that stretch reads WWVPPCCGTASAVIGLLY. Residues 89-103 are Cytoplasmic-facing; sequence PCIDRHLGEPHKFKR. Residues 104 to 126 form a helical membrane-spanning segment; the sequence is EWSSVMRCVAVFVGINHASAKVD. Residues 127–129 are Lumenal-facing; that stretch reads FDN. A helical transmembrane segment spans residues 130-148; that stretch reads NIQLSLTLAALSIGLWWTF. Residues 149 to 153 lie on the Cytoplasmic side of the membrane; the sequence is DRSRS. A Phosphoserine; by PCK1 modification is found at Ser-151. A helical transmembrane segment spans residues 154–175; the sequence is GFGLGVGIAFLATVVTQLLVYN. Over 176–189 the chain is Lumenal; the sequence is GVYQYTSPDFLYVR. Residues 190–207 form a helical membrane-spanning segment; the sequence is SWLPCIFFAGGITMGNIG. Topologically, residues 208–225 are cytoplasmic; sequence RQLAMYECKVIAEKSHQE. Cys-215 bears the Cysteine sulfenic acid (-SOH); alternate mark. Cys-215 is covalently cross-linked (Glycyl cysteine thioester (Cys-Gly) (interchain with G-Cter in ubiquitin); alternate). The KxHxx signature appears at 219–225; the sequence is AEKSHQE.

It belongs to the INSIG family. In terms of assembly, interacts with SCAP; interaction is direct and only takes place in the presence of sterols; it prevents interaction between SCAP and the coat protein complex II (COPII). Associates with the SCAP-SREBP complex (composed of SCAP and SREBF1/SREBP1 or SREBF2/SREBP2); association is mediated via its interaction with SCAP and only takes place in the presence of sterols. Interacts with RNF139. Interacts with RNF145. In terms of processing, phosphorylation at Ser-151 by PCK1 reduces binding to oxysterol, disrupting the interaction between INSIG2 and SCAP, thereby promoting nuclear translocation of SREBP proteins (SREBF1/SREBP1 or SREBF2/SREBP2) and subsequent transcription of downstream lipogenesis-related genes. Polyubiquitinated by AMFR/gp78 at Cys-215 in some tissues such as adipose tissues, undifferentiated myoblasts and liver, leading to its degradation. In differentiated myotubes, Cys-215 oxidation prevents ubiquitination at the same site, resulting in protein stabilization. Post-translationally, oxidized at Cys-215 in differentiated myotubes, preventing ubiquitination at the same site, and resulting in protein stabilization.

It localises to the endoplasmic reticulum membrane. Oxysterol-binding protein that mediates feedback control of cholesterol synthesis by controlling both endoplasmic reticulum to Golgi transport of SCAP and degradation of HMGCR. Acts as a negative regulator of cholesterol biosynthesis by mediating the retention of the SCAP-SREBP complex in the endoplasmic reticulum, thereby blocking the processing of sterol regulatory element-binding proteins (SREBPs) SREBF1/SREBP1 and SREBF2/SREBP2. Binds oxysterol, including 22-hydroxycholesterol, 24-hydroxycholesterol, 25-hydroxycholesterol and 27-hydroxycholesterol, regulating interaction with SCAP and retention of the SCAP-SREBP complex in the endoplasmic reticulum. In presence of oxysterol, interacts with SCAP, retaining the SCAP-SREBP complex in the endoplasmic reticulum, thereby preventing SCAP from escorting SREBF1/SREBP1 and SREBF2/SREBP2 to the Golgi. Sterol deprivation or phosphorylation by PCK1 reduce oxysterol-binding, disrupting the interaction between INSIG2 and SCAP, thereby promoting Golgi transport of the SCAP-SREBP complex, followed by processing and nuclear translocation of SREBF1/SREBP1 and SREBF2/SREBP2. Also regulates cholesterol synthesis by regulating degradation of HMGCR: initiates the sterol-mediated ubiquitin-mediated endoplasmic reticulum-associated degradation (ERAD) of HMGCR via recruitment of the reductase to the ubiquitin ligase RNF139. The sequence is that of Insulin-induced gene 2 protein from Homo sapiens (Human).